The sequence spans 614 residues: DNA ligase (614 aa).

NAD(+) is bound by residues 29 to 33 (DQDYD) and 73 to 74 (SI). Lysine 111 functions as the N6-AMP-lysine intermediate in the catalytic mechanism. NAD(+) is bound by residues arginine 127, glutamate 158, and lysine 270. Residues cysteine 358, cysteine 361, cysteine 374, and cysteine 380 each contribute to the Zn(2+) site. In terms of domain architecture, BRCT spans 538-614 (TLTHELFDKK…MTETDYLSKI (77 aa)).

This sequence belongs to the NAD-dependent DNA ligase family. LigA subfamily. It depends on Mg(2+) as a cofactor. Mn(2+) serves as cofactor.

It carries out the reaction NAD(+) + (deoxyribonucleotide)n-3'-hydroxyl + 5'-phospho-(deoxyribonucleotide)m = (deoxyribonucleotide)n+m + AMP + beta-nicotinamide D-nucleotide.. DNA ligase that catalyzes the formation of phosphodiester linkages between 5'-phosphoryl and 3'-hydroxyl groups in double-stranded DNA using NAD as a coenzyme and as the energy source for the reaction. It is essential for DNA replication and repair of damaged DNA. The sequence is that of DNA ligase from Ruthia magnifica subsp. Calyptogena magnifica.